The following is a 673-amino-acid chain: Probable urea active transporter 2 (673 aa).

The next 14 membrane-spanning stretches (helical) occupy residues Gly8–Ile28, Ile83–Leu103, Val132–Gly152, Thr164–Leu184, Val196–Ser218, Met249–Gly269, Leu287–Ala307, Ile336–Phe356, Gln391–Ser411, Leu424–Asn446, Phe451–Ser471, Phe492–Ile512, Ile559–Gly579, and Leu592–Leu612.

The protein belongs to the sodium:solute symporter (SSF) (TC 2.A.21) family.

The protein localises to the endoplasmic reticulum membrane. In terms of biological role, involved in active transport of urea. This chain is Probable urea active transporter 2 (dur3-2), found in Schizosaccharomyces pombe (strain 972 / ATCC 24843) (Fission yeast).